The primary structure comprises 166 residues: Probable chemoreceptor glutamine deamidase CheD 1 (166 aa).

It belongs to the CheD family.

It carries out the reaction L-glutaminyl-[protein] + H2O = L-glutamyl-[protein] + NH4(+). Functionally, probably deamidates glutamine residues to glutamate on methyl-accepting chemotaxis receptors (MCPs), playing an important role in chemotaxis. The chain is Probable chemoreceptor glutamine deamidase CheD 1 from Leptospira interrogans serogroup Icterohaemorrhagiae serovar copenhageni (strain Fiocruz L1-130).